Reading from the N-terminus, the 166-residue chain is Large ribosomal subunit protein eL21 (166 aa).

Belongs to the eukaryotic ribosomal protein eL21 family. As to quaternary structure, component of the large ribosomal subunit.

The protein localises to the cytoplasm. The protein resides in the cytosol. It localises to the endoplasmic reticulum. In terms of biological role, component of the large ribosomal subunit. The ribosome is a large ribonucleoprotein complex responsible for the synthesis of proteins in the cell. The sequence is that of Large ribosomal subunit protein eL21 (RPL21) from Entamoeba histolytica (strain ATCC 30459 / HM-1:IMSS / ABRM).